We begin with the raw amino-acid sequence, 453 residues long: L-cysteine:1D-myo-inositol 2-amino-2-deoxy-alpha-D-glucopyranoside ligase (453 aa).

Zn(2+) is bound at residue cysteine 58. L-cysteinyl-5'-AMP contacts are provided by residues 58 to 61, threonine 73, and 96 to 98; these read CGIT and NVT. The 'HIGH' region signature appears at 60–70; that stretch reads ITPYDATHMGH. A 'ERGGDP' region motif is present at residues 221–226; sequence ERGGDP. Tryptophan 262 provides a ligand contact to L-cysteinyl-5'-AMP. Cysteine 266 lines the Zn(2+) pocket. Residue 284-286 participates in L-cysteinyl-5'-AMP binding; sequence GND. Histidine 291 provides a ligand contact to Zn(2+). Valine 317 provides a ligand contact to L-cysteinyl-5'-AMP. Positions 323–327 match the 'KMSKS' region motif; the sequence is KMSKS.

The protein belongs to the class-I aminoacyl-tRNA synthetase family. MshC subfamily. Monomer. Zn(2+) serves as cofactor.

The catalysed reaction is 1D-myo-inositol 2-amino-2-deoxy-alpha-D-glucopyranoside + L-cysteine + ATP = 1D-myo-inositol 2-(L-cysteinylamino)-2-deoxy-alpha-D-glucopyranoside + AMP + diphosphate + H(+). Functionally, catalyzes the ATP-dependent condensation of GlcN-Ins and L-cysteine to form L-Cys-GlcN-Ins. The polypeptide is L-cysteine:1D-myo-inositol 2-amino-2-deoxy-alpha-D-glucopyranoside ligase (Rothia mucilaginosa (strain DY-18) (Stomatococcus mucilaginosus)).